Consider the following 84-residue polypeptide: Small ribosomal subunit protein bS18 (84 aa).

It belongs to the bacterial ribosomal protein bS18 family. Part of the 30S ribosomal subunit. Forms a tight heterodimer with protein bS6.

Functionally, binds as a heterodimer with protein bS6 to the central domain of the 16S rRNA, where it helps stabilize the platform of the 30S subunit. This Vesicomyosocius okutanii subsp. Calyptogena okutanii (strain HA) protein is Small ribosomal subunit protein bS18.